The sequence spans 907 residues: Protein translocase subunit SecA (907 aa).

ATP contacts are provided by residues Q87, 105-109 (GEGKT), and D512. The disordered stretch occupies residues 870–897 (AALAATQPQVREGEKVGRNDPCPCGSGK). Zn(2+)-binding residues include C891, C893, C902, and H903.

This sequence belongs to the SecA family. As to quaternary structure, monomer and homodimer. Part of the essential Sec protein translocation apparatus which comprises SecA, SecYEG and auxiliary proteins SecDF-YajC and YidC. Zn(2+) is required as a cofactor.

It is found in the cell inner membrane. The protein resides in the cytoplasm. It catalyses the reaction ATP + H2O + cellular proteinSide 1 = ADP + phosphate + cellular proteinSide 2.. Its function is as follows. Part of the Sec protein translocase complex. Interacts with the SecYEG preprotein conducting channel. Has a central role in coupling the hydrolysis of ATP to the transfer of proteins into and across the cell membrane, serving both as a receptor for the preprotein-SecB complex and as an ATP-driven molecular motor driving the stepwise translocation of polypeptide chains across the membrane. The sequence is that of Protein translocase subunit SecA from Shewanella piezotolerans (strain WP3 / JCM 13877).